A 213-amino-acid chain; its full sequence is Cytochrome b6 (213 aa).

Residues 30–50 (IFFCLGGLTLLCFIVQCLTGI) form a helical membrane-spanning segment. Position 33 (cysteine 33) interacts with heme c. Heme b contacts are provided by histidine 84 and histidine 98. The next 3 helical transmembrane spans lie at 88–108 (CQLM…TGAF), 114–134 (LNWV…FTGY), and 184–204 (LHVM…FIMI). The heme b site is built by histidine 185 and histidine 200.

The protein belongs to the cytochrome b family. PetB subfamily. As to quaternary structure, the subunits of the cytochrome bc complex are a Rieske Fe-S protein (PetC), cytochrome b6 (PetB), subunit IV (PetD), and a diheme cytochrome c (PetX). It depends on heme b as a cofactor. Heme c is required as a cofactor.

It localises to the cell membrane. Functionally, component of the cytochrome bc complex which donates electrons to the photosynthetic reaction center. The chain is Cytochrome b6 from Heliomicrobium gestii (Heliobacterium gestii).